Consider the following 401-residue polypeptide: Argininosuccinate synthase (401 aa).

An ATP-binding site is contributed by 8–16 (AYSGGLDTS). Tyr-87 contacts L-citrulline. Gly-117 serves as a coordination point for ATP. The L-aspartate site is built by Thr-119, Asn-123, and Asp-124. Residue Asn-123 coordinates L-citrulline. Arg-127, Ser-175, Glu-259, and Tyr-271 together coordinate L-citrulline.

This sequence belongs to the argininosuccinate synthase family. Type 1 subfamily. In terms of assembly, homotetramer.

Its subcellular location is the cytoplasm. It catalyses the reaction L-citrulline + L-aspartate + ATP = 2-(N(omega)-L-arginino)succinate + AMP + diphosphate + H(+). Its pathway is amino-acid biosynthesis; L-arginine biosynthesis; L-arginine from L-ornithine and carbamoyl phosphate: step 2/3. The sequence is that of Argininosuccinate synthase from Pseudarthrobacter chlorophenolicus (strain ATCC 700700 / DSM 12829 / CIP 107037 / JCM 12360 / KCTC 9906 / NCIMB 13794 / A6) (Arthrobacter chlorophenolicus).